Consider the following 414-residue polypeptide: MAAPSSLASSSHLSRRATAAASPSIPPPSPPPPPQRLRCGWVGRAAPPTRRAPGVCSVVSPSKPGVAAVDVPAATIPDAAATGVGVAERISVSSLLEVVADDLLKLNNNLKSLVGAENPVLVSAAEQIFGAGGKRLRPALVFLVSRATAELAGLLELTTEHQRLAEIIEMIHTASLIHDDVIDDSGMRRGKETIHQLYGTRVAVLAGDFMFAQSSWFLANLENIEVIKLISQVIKDFASGEIKQASTLFDCDITLDDYLLKSYYKTASLIAASTRSAAIFSGVSTAICEQMYEYGRNLGLSFQVVDDILDFTQSAEQLGKPAGSDLAKGNLTAPVIFALQDEPQLREIIDSEFSETNSLATAIELVHRSGGIKRAHELAREKGEIAIQSLQCLPRSEFRSTLENMVKYNLERID.

The segment covering 1–23 (MAAPSSLASSSHLSRRATAAASP) has biased composition (low complexity). Residues 1–36 (MAAPSSLASSSHLSRRATAAASPSIPPPSPPPPPQR) form a disordered region. The N-terminal 72 residues, 1-72 (MAAPSSLASS…KPGVAAVDVP (72 aa)), are a transit peptide targeting the chloroplast. A compositionally biased stretch (pro residues) spans 24-35 (SIPPPSPPPPPQ). Positions 134, 137, and 172 each coordinate isopentenyl diphosphate. Mg(2+) is bound by residues D179 and D183. R188 serves as a coordination point for an all-trans-polyprenyl diphosphate. R189 serves as a coordination point for isopentenyl diphosphate. K265, T266, Q303, and K320 together coordinate an all-trans-polyprenyl diphosphate.

It belongs to the FPP/GGPP synthase family. In terms of assembly, homodimer. Requires Mg(2+) as cofactor.

It is found in the plastid. It localises to the chloroplast. The enzyme catalyses 7 isopentenyl diphosphate + (2E)-geranyl diphosphate = all-trans-nonaprenyl diphosphate + 7 diphosphate. Involved in providing solanesyl diphosphate for plastoquinone-9 (PQ-9) formation. The protein is Probable solanesyl-diphosphate synthase 3, chloroplastic of Oryza sativa subsp. japonica (Rice).